The following is a 491-amino-acid chain: UDP-N-acetylmuramate--L-alanine ligase (491 aa).

126 to 132 serves as a coordination point for ATP; sequence GTHGKTT.

It belongs to the MurCDEF family.

It localises to the cytoplasm. The enzyme catalyses UDP-N-acetyl-alpha-D-muramate + L-alanine + ATP = UDP-N-acetyl-alpha-D-muramoyl-L-alanine + ADP + phosphate + H(+). It functions in the pathway cell wall biogenesis; peptidoglycan biosynthesis. In terms of biological role, cell wall formation. The protein is UDP-N-acetylmuramate--L-alanine ligase of Shigella boydii serotype 18 (strain CDC 3083-94 / BS512).